A 392-amino-acid chain; its full sequence is MVKWRNNMNINELKKEFIKIYGEGSMRNFFSPGRVNLIGEHIDYNGGHVFPCALNFGTLGCVRKRKDNKVNLASTNIPLKVSINLEDIKYEKKHGWGNYPKGVIKEIIDKGYKVGGMDILISGNIPNGSGLSSSASLELLIAIMINNIFNDGKLDKVELIKLSQKAENDFVGLNCGIMDQFAVAMGKKDMAILLDCNTLEYKYAPVDLGNYVITIMNTNKRRELSDSKYNERRLECEKALKLINKEKKINYLCELSLEEFESLKYLIKDNRVLNRATHVVYENERVKRAYYLLSKRNLKEFGKLLAESHFSLRDLYEVTGKELDAIVGEALNVSGCIGARMIGAGFGGCAIALVEKSKLDLFKKKVSNNYNKIIGYKPGFYTSEIGEGTYEI.

40 to 43 (EHID) is a binding site for substrate. ATP is bound by residues Ser74 and 128 to 134 (GSGLSSS). Mg(2+) is bound by residues Ser134 and Glu167. The active-site Proton acceptor is Asp179. Tyr229 contacts substrate.

This sequence belongs to the GHMP kinase family. GalK subfamily.

The protein localises to the cytoplasm. The enzyme catalyses alpha-D-galactose + ATP = alpha-D-galactose 1-phosphate + ADP + H(+). The protein operates within carbohydrate metabolism; galactose metabolism. Catalyzes the transfer of the gamma-phosphate of ATP to D-galactose to form alpha-D-galactose-1-phosphate (Gal-1-P). This chain is Galactokinase, found in Clostridium tetani (strain Massachusetts / E88).